The chain runs to 177 residues: Putative membrane protein 165 (177 aa).

Over 1-7 (MYLVLLI) the chain is Intravirion. The chain crosses the membrane as a helical span at residues 8 to 24 (AVILFIIVILMIFLISG). Residues 25–166 (LFYPEQEPAL…DPHPALKSKN (142 aa)) lie on the Virion surface side of the membrane.

This sequence belongs to the asfivirus envelope protein p22 family.

Its subcellular location is the virion membrane. It is found in the host cell membrane. The sequence is that of Putative membrane protein 165 from African swine fever virus (isolate Pig/Kenya/KEN-50/1950) (ASFV).